Here is a 223-residue protein sequence, read N- to C-terminus: SCMKAAPMKEVSIRGQGSLAYPGLQTQGNLETLSGPNDATRGLTSLADTFEHVIEELLDEQQVIQSSKENKDADLYSSRVMLSSQVPLEPPLLFLLEEYKNYLDAANMSMRVRRHSDPARRGELSVCDSTSEWVTAAEKKTAVDMSGATVTVLEKVPVPKGQLKQYFYETKCSSKGYAKEGCRGIDKRYWNSQCRTTQSYVRALTMDNKKRVGWRFIRIDTSC.

The first 5 residues, 1-5, serve as a signal peptide directing secretion; the sequence is SCMKA. The propeptide occupies 6–114; sequence APMKEVSIRG…AANMSMRVRR (109 aa). Asn-107 carries an N-linked (GlcNAc...) asparagine glycan. Intrachain disulfides connect Cys-127/Cys-194 and Cys-172/Cys-223.

Belongs to the NGF-beta family.

The protein localises to the secreted. In terms of biological role, promotes the survival of neuronal populations that are all located either in the central nervous system or directly connected to it. In Aspidites melanocephalus (Black-headed python), this protein is Neurotrophic factor BDNF precursor form (BDNF).